The primary structure comprises 257 residues: DNA repair protein RecO (257 aa).

This sequence belongs to the RecO family.

In terms of biological role, involved in DNA repair and RecF pathway recombination. This chain is DNA repair protein RecO, found in Synechococcus sp. (strain CC9605).